Consider the following 338-residue polypeptide: MQFIDEVKIHVQSGHGGAGCVSFRREKFIPFGGPDGGDGGKGGDVIFTVDPNLSTLMDLRYRPHLKAGRGKNGMGKDRHGANGDDLTIPVPPGTIVKDAETGEILADLTEPGQTVVLLKGGRGGQGNARFTTSTNRAPKFAQPGEDEEERWLRLELKLMADVGLLGFPNVGKSSFITKVSAARPKIADYPFTTIKPNLGVVSYKNYRSFVVADIPGIIEGASEGAGLGHRFLKHVERTNILLHLIDLSWIPDRDPIREYETLNRELALFSPELAGKEQIAVINKIDLPVVRENLPSVIDWFKERGIAVFPISAATGEGIPTLLDEIARHLWGQAEEEW.

An Obg domain is found at 1–159 (MQFIDEVKIH…RWLRLELKLM (159 aa)). Residues 66–91 (KAGRGKNGMGKDRHGANGDDLTIPVP) are disordered. Positions 160–331 (ADVGLLGFPN…LLDEIARHLW (172 aa)) constitute an OBG-type G domain. Residues 166–173 (GFPNVGKS), 191–195 (FTTIK), 213–216 (DIPG), 283–286 (NKID), and 312–314 (SAA) contribute to the GTP site. Mg(2+) contacts are provided by Ser-173 and Thr-193.

Belongs to the TRAFAC class OBG-HflX-like GTPase superfamily. OBG GTPase family. As to quaternary structure, monomer. Mg(2+) is required as a cofactor.

It localises to the cytoplasm. In terms of biological role, an essential GTPase which binds GTP, GDP and possibly (p)ppGpp with moderate affinity, with high nucleotide exchange rates and a fairly low GTP hydrolysis rate. Plays a role in control of the cell cycle, stress response, ribosome biogenesis and in those bacteria that undergo differentiation, in morphogenesis control. The polypeptide is GTPase Obg (Geobacter metallireducens (strain ATCC 53774 / DSM 7210 / GS-15)).